Consider the following 601-residue polypeptide: Protein CT_858 (601 aa).

Belongs to the chlamydial CPn_1016/CT_858/TC_0248 family.

The sequence is that of Protein CT_858 from Chlamydia trachomatis serovar D (strain ATCC VR-885 / DSM 19411 / UW-3/Cx).